A 421-amino-acid chain; its full sequence is O-acetyl-L-homoserine sulfhydrylase 1 (421 aa).

K206 carries the post-translational modification N6-(pyridoxal phosphate)lysine.

The protein belongs to the trans-sulfuration enzymes family. In terms of assembly, homotetramer. It depends on pyridoxal 5'-phosphate as a cofactor.

It catalyses the reaction O-acetyl-L-homoserine + hydrogen sulfide = L-homocysteine + acetate. It participates in amino-acid biosynthesis; L-methionine biosynthesis via de novo pathway; L-homocysteine from O-acetyl-L-homoserine: step 1/1. Its activity is regulated as follows. Inhibited by the carbonyl reagents hydroxylamine and phenylhydrazine. Also inhibited by methionine and propargylglycine. Catalyzes the conversion of O-acetyl-L-homoserine (OAH) into homocysteine in the methionine biosynthesis pathway. Has weak activity with O-acetyl-L-serine, O-phospho-L-serine, L-serine, O-succinyl-L-homoserine and L-homoserine. Shows low CTT beta-lyase activity and very low CTT gamma-synthase activity. The sequence is that of O-acetyl-L-homoserine sulfhydrylase 1 from Thermus thermophilus (strain ATCC 27634 / DSM 579 / HB8).